A 56-amino-acid polypeptide reads, in one-letter code: Protein SspF (56 aa).

This sequence belongs to the alpha/beta-type SASP family.

In terms of biological role, may play some important role in either sporulation or the dormant spore. The chain is Protein SspF (sspF) from Priestia megaterium (strain ATCC 12872 / QMB1551) (Bacillus megaterium).